The chain runs to 480 residues: Adenylosuccinate lyase (480 aa).

Positions 14, 15, 79, 80, and 81 each coordinate AMP. H80 is a binding site for fumarate. Catalysis depends on H153, which acts as the Proton donor/acceptor. Q236 serves as a coordination point for AMP. Fumarate is bound at residue Q236. Q236 is a N(6)-(1,2-dicarboxyethyl)-AMP binding site. Catalysis depends on S284, which acts as the Proton donor/acceptor. Residues S285, K290, and N292 each contribute to the fumarate site. 3 residues coordinate N(6)-(1,2-dicarboxyethyl)-AMP: S285, K290, and N292. R298 lines the AMP pocket. Residues R324, S329, and R333 each coordinate N(6)-(1,2-dicarboxyethyl)-AMP. Residues S329 and R333 each coordinate AMP.

The protein belongs to the lyase 1 family. Adenylosuccinate lyase subfamily. In terms of assembly, homotetramer.

The enzyme catalyses N(6)-(1,2-dicarboxyethyl)-AMP = fumarate + AMP. Its pathway is purine metabolism; AMP biosynthesis via salvage pathway. In terms of biological role, catalyzes conversion of succinyladenosine monophosphate (SAMP) to AMP and fumarate on the purine salvage pathway. The protein is Adenylosuccinate lyase of Schistosoma mansoni (Blood fluke).